Reading from the N-terminus, the 75-residue chain is Small ribosomal subunit protein bS18 (75 aa).

This sequence belongs to the bacterial ribosomal protein bS18 family. Part of the 30S ribosomal subunit. Forms a tight heterodimer with protein bS6.

Its function is as follows. Binds as a heterodimer with protein bS6 to the central domain of the 16S rRNA, where it helps stabilize the platform of the 30S subunit. The sequence is that of Small ribosomal subunit protein bS18 from Mycoplasma mycoides subsp. mycoides SC (strain CCUG 32753 / NCTC 10114 / PG1).